The sequence spans 849 residues: Lysine-specific histone demethylase 1 homolog 1 (849 aa).

The disordered stretch occupies residues 1–118; it reads MEEGSEAQPP…RRRRKKQFPG (118 aa). Composition is skewed to low complexity over residues 34-67 and 89-103; these read GQAAAAEAMEGEAEGAAAAAGTIEGEAGYAAADA and PTSSAPSATAAVDDS. Basic residues predominate over residues 106–115; sequence ARKRRRRKKQ. The 102-residue stretch at 159 to 260 folds into the SWIRM domain; it reads ARELDAEALI…FGLAPSVISL (102 aa). 4 residues coordinate FAD: E300, R302, R308, and E688.

Belongs to the flavin monoamine oxidase family. FAD serves as cofactor.

Functionally, probable histone demethylase. The protein is Lysine-specific histone demethylase 1 homolog 1 of Oryza sativa subsp. japonica (Rice).